The chain runs to 123 residues: Holo-[acyl-carrier-protein] synthase (123 aa).

Mg(2+) contacts are provided by aspartate 8 and glutamate 60.

It belongs to the P-Pant transferase superfamily. AcpS family. It depends on Mg(2+) as a cofactor.

It localises to the cytoplasm. It carries out the reaction apo-[ACP] + CoA = holo-[ACP] + adenosine 3',5'-bisphosphate + H(+). Functionally, transfers the 4'-phosphopantetheine moiety from coenzyme A to a Ser of acyl-carrier-protein. This is Holo-[acyl-carrier-protein] synthase from Wolbachia pipientis wMel.